Here is a 990-residue protein sequence, read N- to C-terminus: F-box/LRR-repeat protein 15 (990 aa).

The F-box domain occupies 190-236 (FEVHIDLTDDLLHMVFSFLNHVDLCRSAMVCRQWRVASAHEDFWRVL). LRR repeat units follow at residues 237 to 258 (NFEN…YPNA), 280 to 303 (LRNL…ALGE), 317 to 341 (LGNG…KCRV), 348 to 373 (CPQL…LLQL), 397 to 423 (LESL…CANL), 441 to 465 (LPML…WIAN), 466 to 477 (SPALEVLELDNC), 478 to 503 (NLLT…KFTD), 519 to 542 (CPAL…KQEN), 550 to 574 (CHSL…IFSD), 589 to 612 (CESL…GCRA), 614 to 633 (TSLE…GCDH), 640 to 652 (QPVA…LGIC), 653 to 678 (PKLS…VLSE), 734 to 756 (LPNL…VFKS), 758 to 782 (IQLK…LYKE), 785 to 809 (LPAL…LLAC), 813 to 839 (LTHL…LFDY), 882 to 893 (FYHLSTLNLSLS), 894 to 914 (VNLK…LSNC), 915 to 937 (CSLE…SCNM), and 949 to 973 (CSSL…KFRT).

The polypeptide is F-box/LRR-repeat protein 15 (FBL15) (Arabidopsis thaliana (Mouse-ear cress)).